We begin with the raw amino-acid sequence, 139 residues long: Peptide methionine sulfoxide reductase MsrB (139 aa).

Residues 8–130 (DQEWRQQLTD…NSASLRFHSA (123 aa)) form the MsrB domain. The Zn(2+) site is built by Cys-47, Cys-50, Cys-96, and Cys-99. Catalysis depends on Cys-119, which acts as the Nucleophile.

It belongs to the MsrB Met sulfoxide reductase family. Zn(2+) serves as cofactor.

It catalyses the reaction L-methionyl-[protein] + [thioredoxin]-disulfide + H2O = L-methionyl-(R)-S-oxide-[protein] + [thioredoxin]-dithiol. This is Peptide methionine sulfoxide reductase MsrB from Hahella chejuensis (strain KCTC 2396).